Here is a 546-residue protein sequence, read N- to C-terminus: Chaperonin GroEL 4 (546 aa).

ATP contacts are provided by residues 30–33 (TLGP), Lys51, 87–91 (DGTTT), Gly415, and Asp496.

The protein belongs to the chaperonin (HSP60) family. In terms of assembly, forms a cylinder of 14 subunits composed of two heptameric rings stacked back-to-back. Interacts with the co-chaperonin GroES.

The protein resides in the cytoplasm. It catalyses the reaction ATP + H2O + a folded polypeptide = ADP + phosphate + an unfolded polypeptide.. Its function is as follows. Together with its co-chaperonin GroES, plays an essential role in assisting protein folding. The GroEL-GroES system forms a nano-cage that allows encapsulation of the non-native substrate proteins and provides a physical environment optimized to promote and accelerate protein folding. This chain is Chaperonin GroEL 4, found in Bradyrhizobium sp. (strain BTAi1 / ATCC BAA-1182).